Here is an 89-residue protein sequence, read N- to C-terminus: Small ribosomal subunit protein uS14A (89 aa).

Belongs to the universal ribosomal protein uS14 family. As to quaternary structure, part of the 30S ribosomal subunit. Contacts proteins S3 and S10.

In terms of biological role, binds 16S rRNA, required for the assembly of 30S particles and may also be responsible for determining the conformation of the 16S rRNA at the A site. This chain is Small ribosomal subunit protein uS14A, found in Bacillus pumilus (strain SAFR-032).